Consider the following 579-residue polypeptide: MTDHKIIMLLLLGIYCIQATQFTQVNIDNGPIKGTLQYVEGRAIRVFKGIPFAEPPVNNLRWKAPVPYTKKWHNPLNTTEYKPKCPQYVAPGTVPEPRGISEDCLYTNVWAPVPEYHGETFPVMVWIHGGAFISGSPEDFGVGNFSILAVTKRIIIVAASYRVNAFGFFSSELLGKSQLEARGVYGLLDQRLGLKWVKNNIAAFGGKSKDITIYGQSAGGISVCLQAVTPLNDLPGEKLFTRVIGSSGYCDILPMTNNSADAGLVQKLNCTTKECLYALPWQNITNAVGPGFLSFQPTVGINKFLPDQPISLLADRTNPRSKNFVPDIYMQGFTANEGTFVLYNYFPQTYDNPNTPGFPTQQMADALSIASGNYSAEFYYNDLAPLYSTEYNSNVTYPGQGFISRVDDIMACNTRRNMIYWQQSKKTKAHSWYFDSAPDTHIYPSWTKVFHESDVFYVARRCDGLWCTNLTCQQDNLGKTMNIYWNSAIRAASLTPKNKMDNLRDVPVWPQYGKNEVVMHFTAVGENKGPQTSVLFSSIISADGDYQYLQRCKILDRVRAEYYNIPALDPETYLNACSK.

The N-terminal stretch at 1–19 is a signal peptide; it reads MTDHKIIMLLLLGIYCIQA. N-linked (GlcNAc...) asparagine; by host glycosylation is found at Asn77 and Asn144. Ser217 functions as the Acyl-ester intermediate in the catalytic mechanism. N-linked (GlcNAc...) asparagine; by host glycosylation is found at Asn257, Asn269, and Asn283. Glu337 serves as the catalytic Charge relay system. Asn373 and Asn394 each carry an N-linked (GlcNAc...) asparagine; by host glycan. The active-site Charge relay system is His451. Asn469 carries an N-linked (GlcNAc...) asparagine; by host glycan.

The protein belongs to the type-B carboxylesterase/lipase family.

The catalysed reaction is an acylcholine + H2O = a carboxylate + choline + H(+). May be involved in the disruption of the host membrane. The protein is Probable cholinesterase of Acanthamoeba polyphaga mimivirus (APMV).